The sequence spans 575 residues: Cytoskeleton-associated protein 4 (575 aa).

The segment at 1-73 (MPSAKQRGSK…RGRSSAATAN (73 aa)) is disordered. Over 1-85 (MPSAKQRGSK…SASCSRRLGR (85 aa)) the chain is Cytoplasmic. Serine 3, serine 17, and serine 19 each carry phosphoserine. The residue at position 21 (lysine 21) is an N6-acetyllysine. Positions 37–53 (PAAPQQPQPPAPHPPQH) are enriched in pro residues. Cysteine 79 is lipidated: S-palmitoyl cysteine; by ZDHHC2. Residues 86-108 (VLNFLFYLSLVAAAAFSGWYVHH) form a helical membrane-spanning segment. At 109-575 (VLEEVQQVRR…LKVEKIHEKI (467 aa)) the chain is on the extracellular side. Positions 125-193 (RQRDELGQGL…QKLQNEILKD (69 aa)) form a coiled coil. Phosphoserine occurs at positions 211, 292, and 367. Coiled coils occupy residues 236-438 (DVQK…VGNL) and 507-575 (SSLD…HEKI).

Interacts with REEP5. Reversibly palmitoylated. Palmitoylation at Cys-79 by DHHC2 is required for its trafficking from the ER to the plasma membrane and for its perinuclear localization. Post-translationally, increased phosphorylation during mitosis prevents binding to microtubules. As to expression, expressed in cardiomyocytes (at protein level).

It localises to the endoplasmic reticulum membrane. Its subcellular location is the cell membrane. The protein resides in the cytoplasm. The protein localises to the cytoskeleton. It is found in the perinuclear region. Its function is as follows. High-affinity epithelial cell surface receptor for APF. Mediates the anchoring of the endoplasmic reticulum to microtubules. The chain is Cytoskeleton-associated protein 4 (Ckap4) from Mus musculus (Mouse).